The sequence spans 315 residues: High mobility group protein hmg-12 (315 aa).

The interval 57-315 is disordered; sequence VKNETDSEAV…AIDAFFDGSD (259 aa). Residues 77-86 are compositionally biased toward polar residues; the sequence is ANDSPANTND. The segment at residues 118–128 is a DNA-binding region (a.T hook 1); sequence PVKKGRGRPIK. 2 stretches are compositionally biased toward low complexity: residues 147 to 160 and 196 to 205; these read AQTPAADTDAIDTA and AADTDAIDTA.

This sequence belongs to the HMGA family.

The protein resides in the nucleus. In terms of biological role, transcriptional regulator. Binds to specific sequence motifs in regulatory elements. May recruit transcription factors, or may induce structural changes in chromatin, to thereby modulate embryonic expression of ATP-dependent chaperone cdc-48.1. The sequence is that of High mobility group protein hmg-12 from Caenorhabditis elegans.